An 87-amino-acid polypeptide reads, in one-letter code: Exendin-3 (87 aa).

The signal sequence occupies residues 1–21 (MKIILWLCVFGLFLATLFPVS). Residues 22-45 (WQMPVESGLSSEDSASSESFASKI) constitute a propeptide that is removed on maturation. Residue Ser86 is modified to Serine amide.

It belongs to the glucagon family. In terms of tissue distribution, expressed by the venom gland.

It localises to the secreted. Functionally, stimulates vasoactive intestinal peptide (VIP) receptors in high concentrations (&gt;100 nM), resulting in both an increase in cAMP and amylase secretion from pancreatic acini, although at low concentrations (between 0.3 and 3 nM) it increases cAMP without stimulating amylase release. Stimulates the GLP-1 receptor (GLP1R). Induces hypotension that is mediated by relaxation of cardiac smooth muscle. The sequence is that of Exendin-3 from Heloderma horridum horridum (Mexican beaded lizard).